Reading from the N-terminus, the 394-residue chain is Elongation factor Tu (394 aa).

A tr-type G domain is found at 10 to 204 (KPHINIGTIG…AVDDNIPTPE (195 aa)). The interval 19-26 (GHVDHGKT) is G1. Residue 19–26 (GHVDHGKT) participates in GTP binding. Mg(2+) is bound at residue T26. Residues 60–64 (GITIN) are G2. Residues 81 to 84 (DCPG) are G3. Residues 81 to 85 (DCPGH) and 136 to 139 (NKID) contribute to the GTP site. The segment at 136-139 (NKID) is G4. Residues 174-176 (SAL) are G5.

The protein belongs to the TRAFAC class translation factor GTPase superfamily. Classic translation factor GTPase family. EF-Tu/EF-1A subfamily. Monomer.

It localises to the cytoplasm. It carries out the reaction GTP + H2O = GDP + phosphate + H(+). GTP hydrolase that promotes the GTP-dependent binding of aminoacyl-tRNA to the A-site of ribosomes during protein biosynthesis. The sequence is that of Elongation factor Tu from Chlamydia trachomatis serovar L2 (strain ATCC VR-902B / DSM 19102 / 434/Bu).